Reading from the N-terminus, the 493-residue chain is Keratin, type II cuticular Hb3 (493 aa).

Positions 1-111 are head; it reads MTCGFSTVGS…PNAQCVKQEE (111 aa). In terms of domain architecture, IF rod spans 111–422; that stretch reads EKEQIKCLNN…RLLEGEEQRL (312 aa). The tract at residues 112–146 is coil 1A; sequence KEQIKCLNNRFAAFIDKVRFLEQQNKLLETKLQFY. Positions 147–156 are linker 1; sequence QNRQCCESNL. Positions 157-257 are coil 1B; it reads EPLFEGYIET…YEEEIRVLQA (101 aa). Lysine 217 is covalently cross-linked (Glycyl lysine isopeptide (Lys-Gly) (interchain with G-Cter in SUMO1)). The interval 258-274 is linker 12; the sequence is NISDTSVIVKMDNSRGL. The tract at residues 275 to 418 is coil 2; the sequence is NMDNIVAEIK…ATYRRLLEGE (144 aa). The tail stretch occupies residues 419–493; the sequence is EQRLCEGVGA…GGGSCSLGRC (75 aa).

Belongs to the intermediate filament family. Heterotetramer of two type I and two type II keratins.

This chain is Keratin, type II cuticular Hb3, found in Bos taurus (Bovine).